The primary structure comprises 111 residues: uncharacterized protein (111 aa).

The region spanning 4–111 (IFERIIEGAV…LGGGLLGSIA (108 aa)) is the HIT domain. The Histidine triad motif motif lies at 96–100 (HLHIH).

This is an uncharacterized protein from Chlamydia trachomatis serovar D (strain ATCC VR-885 / DSM 19411 / UW-3/Cx).